The chain runs to 92 residues: Acylphosphatase (92 aa).

The 88-residue stretch at 5–92 (CIAAYVYGVV…ADFQGFSIRY (88 aa)) folds into the Acylphosphatase-like domain. Residues Arg-20 and Asn-38 contribute to the active site.

The protein belongs to the acylphosphatase family.

It carries out the reaction an acyl phosphate + H2O = a carboxylate + phosphate + H(+). The protein is Acylphosphatase (acyP) of Serratia proteamaculans (strain 568).